Reading from the N-terminus, the 305-residue chain is Ribonuclease Z (305 aa).

The Zn(2+) site is built by histidine 61, histidine 63, aspartate 65, histidine 66, histidine 138, aspartate 208, and histidine 266. Aspartate 65 serves as the catalytic Proton acceptor.

Belongs to the RNase Z family. In terms of assembly, homodimer. The cofactor is Zn(2+).

It carries out the reaction Endonucleolytic cleavage of RNA, removing extra 3' nucleotides from tRNA precursor, generating 3' termini of tRNAs. A 3'-hydroxy group is left at the tRNA terminus and a 5'-phosphoryl group is left at the trailer molecule.. Its function is as follows. Zinc phosphodiesterase, which displays some tRNA 3'-processing endonuclease activity. Probably involved in tRNA maturation, by removing a 3'-trailer from precursor tRNA. In Methanosarcina mazei (strain ATCC BAA-159 / DSM 3647 / Goe1 / Go1 / JCM 11833 / OCM 88) (Methanosarcina frisia), this protein is Ribonuclease Z.